A 262-amino-acid chain; its full sequence is Thiazole synthase (262 aa).

The active-site Schiff-base intermediate with DXP is Lys-104. 1-deoxy-D-xylulose 5-phosphate is bound by residues Gly-165, 191-192 (AG), and 213-214 (NT).

Belongs to the ThiG family. Homotetramer. Forms heterodimers with either ThiH or ThiS.

Its subcellular location is the cytoplasm. It carries out the reaction [ThiS sulfur-carrier protein]-C-terminal-Gly-aminoethanethioate + 2-iminoacetate + 1-deoxy-D-xylulose 5-phosphate = [ThiS sulfur-carrier protein]-C-terminal Gly-Gly + 2-[(2R,5Z)-2-carboxy-4-methylthiazol-5(2H)-ylidene]ethyl phosphate + 2 H2O + H(+). It functions in the pathway cofactor biosynthesis; thiamine diphosphate biosynthesis. Catalyzes the rearrangement of 1-deoxy-D-xylulose 5-phosphate (DXP) to produce the thiazole phosphate moiety of thiamine. Sulfur is provided by the thiocarboxylate moiety of the carrier protein ThiS. In vitro, sulfur can be provided by H(2)S. The chain is Thiazole synthase from Nitrosococcus oceani (strain ATCC 19707 / BCRC 17464 / JCM 30415 / NCIMB 11848 / C-107).